Reading from the N-terminus, the 972-residue chain is POM121-like protein 2 (972 aa).

6 disordered regions span residues 1-67 (MGSY…PANP), 281-302 (LKKA…SGQL), 328-359 (TEED…IPEM), 406-431 (GISS…PVTD), 676-726 (LGLS…AIDG), and 953-972 (SKTL…TYKK). Basic residues predominate over residues 40–57 (RVQHVHRAQPARRHRPAR). Composition is skewed to polar residues over residues 287–302 (SPNS…SGQL) and 339–352 (VPSN…TGTA). The span at 413-431 (PSIASTQASPSSPTTPVTD) shows a compositional bias: low complexity. The span at 677-696 (GLSSTNQPPVTSSNSNVTSA) shows a compositional bias: polar residues. The span at 697–706 (LTSSLGSSPK) shows a compositional bias: low complexity.

Belongs to the POM121 family.

The chain is POM121-like protein 2 (Pom121l2) from Mus musculus (Mouse).